The primary structure comprises 70 residues: UPF0270 protein VV1_1320 (70 aa).

This sequence belongs to the UPF0270 family.

The sequence is that of UPF0270 protein VV1_1320 from Vibrio vulnificus (strain CMCP6).